The sequence spans 94 residues: Mitochondrial import receptor subunit TOM9-1 (94 aa).

The Cytoplasmic portion of the chain corresponds to 1–48 (MAPKKIGAGKGDSSILAKISNYDIVSQGRRAACDAVYVSKKLLKSTGK). The chain crosses the membrane as a helical span at residues 49-66 (AAWIAGTTFLILAVPLIL). Topologically, residues 67 to 94 (ELEQDHRLGEIDFEQASLLGTPPVGAML) are mitochondrial intermembrane.

Belongs to the Tom22 family. As to quaternary structure, forms part of the preprotein translocase complex of the outer mitochondrial membrane (TOM complex) which consists of at least 6 different proteins (TOM5, TOM6, TOM7, TOM20, TOM22/TOM9 and TOM40). In terms of tissue distribution, expressed in roots, flowers, young cotyledons and leaves.

It is found in the mitochondrion outer membrane. Its function is as follows. Central component of the receptor complex responsible for the recognition and translocation of cytosolically synthesized mitochondrial preproteins. Together with TOM20 functions as the transit peptide receptor at the surface of the mitochondrion outer membrane and facilitates the movement of preproteins into the translocation pore. The chain is Mitochondrial import receptor subunit TOM9-1 (TOM9-1) from Arabidopsis thaliana (Mouse-ear cress).